The primary structure comprises 236 residues: Thymidylate kinase (236 aa).

Residue 9–16 coordinates ATP; it reads GPEGSGKS.

It belongs to the thymidylate kinase family.

It catalyses the reaction dTMP + ATP = dTDP + ADP. Its function is as follows. Phosphorylation of dTMP to form dTDP in both de novo and salvage pathways of dTTP synthesis. In Herpetosiphon aurantiacus (strain ATCC 23779 / DSM 785 / 114-95), this protein is Thymidylate kinase.